The following is a 412-amino-acid chain: Alpha-1-antiproteinase (412 aa).

The N-terminal stretch at Met1–Ala24 is a signal peptide. Ser33 is subject to Phosphoserine. 4 N-linked (GlcNAc...) asparagine glycosylation sites follow: Asn100, Asn133, Asn264, and Asn313. The segment at Ala367–Lys386 is RCL. Position 377 is a phosphoserine (Ser377).

It belongs to the serpin family. As to quaternary structure, interacts with CELA2A. Interacts with ERGIC3 and LMAN1/ERGIC53. Interacts with PRSS1/Trypsin. As to expression, expressed not only in liver but also in kidney tubule cells, where it is regulated by androgens during development.

It localises to the secreted. Its function is as follows. Inhibitor of serine proteases. Its primary target is elastase, but it also has a moderate affinity for plasmin and thrombin. In Mus caroli (Ryukyu mouse), this protein is Alpha-1-antiproteinase (Serpina1).